The sequence spans 208 residues: Small ribosomal subunit protein uS4 (208 aa).

One can recognise an S4 RNA-binding domain in the interval 98 to 161; the sequence is RRLDNVIYRL…RKIPVLAEAQ (64 aa).

This sequence belongs to the universal ribosomal protein uS4 family. In terms of assembly, part of the 30S ribosomal subunit. Contacts protein S5. The interaction surface between S4 and S5 is involved in control of translational fidelity.

In terms of biological role, one of the primary rRNA binding proteins, it binds directly to 16S rRNA where it nucleates assembly of the body of the 30S subunit. Its function is as follows. With S5 and S12 plays an important role in translational accuracy. This Nitratidesulfovibrio vulgaris (strain ATCC 29579 / DSM 644 / CCUG 34227 / NCIMB 8303 / VKM B-1760 / Hildenborough) (Desulfovibrio vulgaris) protein is Small ribosomal subunit protein uS4.